Here is a 136-residue protein sequence, read N- to C-terminus: Succinate dehydrogenase 2 membrane subunit SdhC (136 aa).

Transmembrane regions (helical) follow at residues 32–52 (RISG…AAML), 70–90 (IVGL…LNGI), and 109–129 (LWII…VVGI). H85 provides a ligand contact to heme.

Belongs to the cytochrome b560 family. Part of an enzyme complex containing four subunits: a flavoprotein (SdhA), an iron-sulfur protein (SdhB), plus two membrane-anchoring proteins (SdhC and SdhD). Heme is required as a cofactor.

It localises to the cell membrane. In terms of biological role, membrane-anchoring subunit of succinate dehydrogenase 2 (Sdh2). Sdh2 may catalyze the two-electron oxidation of succinate to fumarate with a corresponding reduction of quinone to quinol under low oxygen conditions, when the primary aerobic succinate dehydrogenase (Sdh1) is inhibited. Sdh2 seems to be the generator of the proton motive force (PMF) under hypoxia. The protein is Succinate dehydrogenase 2 membrane subunit SdhC of Mycobacterium tuberculosis (strain ATCC 25618 / H37Rv).